The primary structure comprises 285 residues: Sulfotransferase 2A1 (285 aa).

Residues K44, S45, G46, T47, N48, and W49 each contribute to the 3'-phosphoadenylyl sulfate site. The active-site Proton acceptor is the H99. 3'-phosphoadenylyl sulfate contacts are provided by R121, S129, Y184, S218, M223, R247, K248, and G249.

It belongs to the sulfotransferase 1 family. In terms of assembly, homodimer. In terms of tissue distribution, highly expressed in liver.

It localises to the cytoplasm. It catalyses the reaction an alcohol + 3'-phosphoadenylyl sulfate = an alkyl sulfate + adenosine 3',5'-bisphosphate + H(+). The enzyme catalyses taurolithocholate + 3'-phosphoadenylyl sulfate = taurolithocholate 3-sulfate + adenosine 3',5'-bisphosphate + H(+). It carries out the reaction pregnenolone + 3'-phosphoadenylyl sulfate = pregnenolone sulfate + adenosine 3',5'-bisphosphate + H(+). The catalysed reaction is 3beta-hydroxyandrost-5-en-17-one + 3'-phosphoadenylyl sulfate = dehydroepiandrosterone 3-sulfate + adenosine 3',5'-bisphosphate + H(+). It catalyses the reaction lithocholate + 3'-phosphoadenylyl sulfate = lithocholate sulfate + adenosine 3',5'-bisphosphate + H(+). The enzyme catalyses (24S)-hydroxycholesterol + 3'-phosphoadenylyl sulfate = (24S)-hydroxycholesterol 24-sulfate + adenosine 3',5'-bisphosphate + H(+). It carries out the reaction (24S)-hydroxycholesterol + 3'-phosphoadenylyl sulfate = (24S)-hydroxycholesterol 3-sulfate + adenosine 3',5'-bisphosphate + H(+). The catalysed reaction is (24S)-hydroxycholesterol 24-sulfate + 3'-phosphoadenylyl sulfate = (24S)-hydroxycholesterol 3,24-disulfate + adenosine 3',5'-bisphosphate + H(+). It catalyses the reaction androsterone + 3'-phosphoadenylyl sulfate = androsterone 3alpha-sulfate + adenosine 3',5'-bisphosphate + H(+). Sulfotransferase that utilizes 3'-phospho-5'-adenylyl sulfate (PAPS) as sulfonate donor to catalyze the sulfonation of steroids and bile acids in the liver and adrenal glands. Mediates the sulfation of a wide range of steroids and sterols, including pregnenolone, androsterone, DHEA, bile acids, cholesterol and as well many xenobiotics that contain alcohol and phenol functional groups. Sulfonation increases the water solubility of most compounds, and therefore their renal excretion, but it can also result in bioactivation to form active metabolites. Plays an important role in maintening steroid and lipid homeostasis. Plays a key role in bile acid metabolism. In addition, catalyzes the metabolic activation of potent carcinogenic polycyclic arylmethanols. The sequence is that of Sulfotransferase 2A1 (Sult2a1) from Mus musculus (Mouse).